Consider the following 212-residue polypeptide: Uracil phosphoribosyltransferase (212 aa).

5-phospho-alpha-D-ribose 1-diphosphate-binding positions include Arg-78, Arg-103, and 130–138 (DPMLATGGS). Uracil-binding positions include Ile-193 and 198 to 200 (GDA). Asp-199 is a binding site for 5-phospho-alpha-D-ribose 1-diphosphate.

The protein belongs to the UPRTase family. Mg(2+) serves as cofactor.

It catalyses the reaction UMP + diphosphate = 5-phospho-alpha-D-ribose 1-diphosphate + uracil. Its pathway is pyrimidine metabolism; UMP biosynthesis via salvage pathway; UMP from uracil: step 1/1. Allosterically activated by GTP. In terms of biological role, catalyzes the conversion of uracil and 5-phospho-alpha-D-ribose 1-diphosphate (PRPP) to UMP and diphosphate. This Pseudomonas paraeruginosa (strain DSM 24068 / PA7) (Pseudomonas aeruginosa (strain PA7)) protein is Uracil phosphoribosyltransferase.